Consider the following 474-residue polypeptide: Cyclin-dependent kinase 18 (474 aa).

Residues Ser14, Ser74, Ser89, Ser98, Ser117, and Ser132 each carry the phosphoserine modification. Residues 44 to 93 (NLQLGPLGRDPPQECSTFSPTDSGEEPGQLSPGVQFQRRQNQRRFSMEDV) are disordered. Residues 144–425 (YVKLDKLGEG…AEAALSHSYF (282 aa)) form the Protein kinase domain. ATP is bound by residues 150 to 158 (LGEGTYATV) and Lys173. Asp265 serves as the catalytic Proton acceptor. Phosphoserine is present on residues Ser440 and Ser443.

It belongs to the protein kinase superfamily. CMGC Ser/Thr protein kinase family. CDC2/CDKX subfamily. As to expression, isoform 2 expression is limited to several subcortical nuclei of the basal gangli and the spinal cord. Isoform 1 is widely expressed.

It carries out the reaction L-seryl-[protein] + ATP = O-phospho-L-seryl-[protein] + ADP + H(+). It catalyses the reaction L-threonyl-[protein] + ATP = O-phospho-L-threonyl-[protein] + ADP + H(+). Functionally, may play a role in signal transduction cascades in terminally differentiated cells. The chain is Cyclin-dependent kinase 18 (CDK18) from Homo sapiens (Human).